Consider the following 179-residue polypeptide: Isopentenyl-diphosphate Delta-isomerase (179 aa).

Mn(2+) is bound by residues His25 and His31. One can recognise a Nudix hydrolase domain in the interval Glu29 to Leu161. The active site involves Cys66. Cys66 contributes to the Mg(2+) binding site. His68 is a Mn(2+) binding site. Residue Glu86 coordinates Mg(2+). Residues Glu111 and Glu113 each coordinate Mn(2+). Glu113 is an active-site residue.

The protein belongs to the IPP isomerase type 1 family. As to quaternary structure, homodimer. It depends on Mg(2+) as a cofactor. Mn(2+) is required as a cofactor.

It is found in the cytoplasm. The enzyme catalyses isopentenyl diphosphate = dimethylallyl diphosphate. It participates in isoprenoid biosynthesis; dimethylallyl diphosphate biosynthesis; dimethylallyl diphosphate from isopentenyl diphosphate: step 1/1. Catalyzes the 1,3-allylic rearrangement of the homoallylic substrate isopentenyl (IPP) to its highly electrophilic allylic isomer, dimethylallyl diphosphate (DMAPP). The protein is Isopentenyl-diphosphate Delta-isomerase of Pectobacterium atrosepticum (strain SCRI 1043 / ATCC BAA-672) (Erwinia carotovora subsp. atroseptica).